We begin with the raw amino-acid sequence, 844 residues long: Striatin-interacting proteins 2 (844 aa).

Positions 1-18 are enriched in low complexity; the sequence is MDDPAAPGPAGSPANDNG. The tract at residues 1–58 is disordered; the sequence is MDDPAAPGPAGSPANDNGNGNGNGNGNGNGGKGKPAVPKGRETFRNQRRESEGSVDCP. Gly residues predominate over residues 19–33; that stretch reads NGNGNGNGNGNGGKG. The span at 39-52 shows a compositional bias: basic and acidic residues; it reads KGRETFRNQRRESE. Residues Ser328, Ser339, and Ser364 each carry the phosphoserine modification. A disordered region spans residues 331 to 355; sequence SYTLDLGESQLAPPPSKLRGRRGSR. Positions 370–422 are disordered; that stretch reads ERDLFKTEEPATEEEEESAADGERTLDGELDLLEQDPLVPPPPSQTPLSTDRV. Residues 379–389 are compositionally biased toward acidic residues; the sequence is PATEEEEESAA.

Belongs to the STRIP family. In terms of assembly, part of the core of STRIPAK complexes composed of PP2A catalytic and scaffolding subunits, the striatins (PP2A regulatory subunits), the striatin-associated proteins MOB4, STRIP1 and STRIP2, PDCD10 and members of the STE20 kinases, such as STK24 and STK26. Interacts with CTTNBP2NL.

It localises to the cytoplasm. Its function is as follows. Plays a role in the regulation of cell morphology and cytoskeletal organization. Required in the control of cell shape. Calmodulin-binding scaffolding protein which is the center of the striatin-interacting phosphatase and kinase (STRIPAK) complexes. STRIPAK complexes have critical roles in protein (de)phosphorylation and are regulators of multiple signaling pathways including Hippo, MAPK, nuclear receptor and cytoskeleton remodeling. Different types of STRIPAK complexes are involved in a variety of biological processes such as cell growth, differentiation, apoptosis, metabolism and immune regulation. This is Striatin-interacting proteins 2 (Strip2) from Mus musculus (Mouse).